We begin with the raw amino-acid sequence, 67 residues long: Large ribosomal subunit protein uL29 (67 aa).

This sequence belongs to the universal ribosomal protein uL29 family.

The polypeptide is Large ribosomal subunit protein uL29 (Acetivibrio thermocellus (strain ATCC 27405 / DSM 1237 / JCM 9322 / NBRC 103400 / NCIMB 10682 / NRRL B-4536 / VPI 7372) (Clostridium thermocellum)).